The primary structure comprises 309 residues: Low density lipoprotein receptor adapter protein 1-B (309 aa).

A PID domain is found at 41–195 (LLEGMLFHLK…SDGEGASSSQ (155 aa)). Residues 179-201 (DKREKSGSDGEGASSSQSDGSSS) form a disordered region. Residues 189 to 201 (EGASSSQSDGSSS) are compositionally biased toward low complexity. A Clathrin box motif is present at residues 213 to 217 (LLDFE). Residues 250–277 (WELDDGLDEAFARLAESRTNPQVLDIGL) form an AP-2 complex binding region. Positions 258–267 (EAFARLAESR) match the [DE]-X(1,2)-F-X-X-[FL]-X-X-X-R motif motif.

As to quaternary structure, interacts (via PID domain) with ldlr (via NPXY motif). Binds to soluble clathrin trimers and to the adapter protein complex 2 (AP-2, beta 2 subunit). Binds to phosphoinositides, which regulate clathrin bud assembly at the cell surface. Interacts with the VLDL receptor (vldlr). Interacts with the vitellogenin receptor. In terms of tissue distribution, expressed at high level during oogenesis and embryogenesis. Found at low level in the adult liver and spleen. Found at very low level in testis and heart. Not found in the oocyte vegetal cortex.

Its subcellular location is the cytoplasm. Adapter protein (clathrin-associated sorting protein (CLASP)) required for efficient endocytosis of the LDL receptor (LDLR). Also involved in the vitellogenin receptor mediated endocytosis of nutrients during oogenesis. In Xenopus laevis (African clawed frog), this protein is Low density lipoprotein receptor adapter protein 1-B.